The chain runs to 502 residues: Mannitol dehydrogenase 2 (502 aa).

The protein belongs to the mannitol dehydrogenase family.

The catalysed reaction is D-mannitol + NAD(+) = D-fructose + NADH + H(+). Functionally, catalyzes the NAD(H)-dependent interconversion of D-fructose and D-mannitol in the mannitol metabolic pathway. This chain is Mannitol dehydrogenase 2, found in Saccharomyces cerevisiae (strain ATCC 204508 / S288c) (Baker's yeast).